Consider the following 198-residue polypeptide: Nucleoid occlusion factor SlmA (198 aa).

The HTH tetR-type domain maps to asparagine 10–leucine 70. The H-T-H motif DNA-binding region spans threonine 33–phenylalanine 52. Residues glutamate 117–arginine 144 are a coiled coil.

The protein belongs to the nucleoid occlusion factor SlmA family. In terms of assembly, homodimer. Interacts with FtsZ.

The protein resides in the cytoplasm. The protein localises to the nucleoid. Its function is as follows. Required for nucleoid occlusion (NO) phenomenon, which prevents Z-ring formation and cell division over the nucleoid. Acts as a DNA-associated cell division inhibitor that binds simultaneously chromosomal DNA and FtsZ, and disrupts the assembly of FtsZ polymers. SlmA-DNA-binding sequences (SBS) are dispersed on non-Ter regions of the chromosome, preventing FtsZ polymerization at these regions. The polypeptide is Nucleoid occlusion factor SlmA (Escherichia coli O127:H6 (strain E2348/69 / EPEC)).